Reading from the N-terminus, the 275-residue chain is 2,3,4,5-tetrahydropyridine-2,6-dicarboxylate N-succinyltransferase (275 aa).

Substrate-binding residues include Arg106 and Asp143.

It belongs to the transferase hexapeptide repeat family. In terms of assembly, homotrimer.

It is found in the cytoplasm. The catalysed reaction is (S)-2,3,4,5-tetrahydrodipicolinate + succinyl-CoA + H2O = (S)-2-succinylamino-6-oxoheptanedioate + CoA. It functions in the pathway amino-acid biosynthesis; L-lysine biosynthesis via DAP pathway; LL-2,6-diaminopimelate from (S)-tetrahydrodipicolinate (succinylase route): step 1/3. The sequence is that of 2,3,4,5-tetrahydropyridine-2,6-dicarboxylate N-succinyltransferase from Cupriavidus necator (strain ATCC 17699 / DSM 428 / KCTC 22496 / NCIMB 10442 / H16 / Stanier 337) (Ralstonia eutropha).